The sequence spans 808 residues: uncharacterized protein (808 aa).

The EF-hand 1 domain occupies 6-41 (SRSEKVKRIFQQFDGNHDGGLNREEMAALVVAVNPR). TPR repeat units lie at residues 234–267 (FDGHMAIGRVLYEHQLFKEALVSFKRACELQPTD), 269–301 (RPHFKAGNCLYVLGKCKESKDEFLLALEAAESG), 310–343 (PQIYVNLGIALEGEGMVLSACEYYREAAILCPTH), 344–377 (FRALKLLGSALFGVGEYRAAVKALEEAIYLKPDY), 378–411 (ADAHCDLASSLHSMGEDERAIEVFQRAIDLKPGH), 412–445 (VDALYNLGGLYMDLGRFQRASEMYTRVLTVWPNH), and 447–479 (RAQLNKAVSLLGAGETEEAKRALKEALKLTNRV). Positions 600 to 635 (AIKAINEKILALLDDSGSGRVDMGMFYAVIAPLCGG) constitute an EF-hand 2 domain. A coiled-coil region spans residues 773–794 (FKQEEYKFREYESEAEAMKAKC).

This is an uncharacterized protein from Arabidopsis thaliana (Mouse-ear cress).